Reading from the N-terminus, the 871-residue chain is DNA mismatch repair protein MutS (871 aa).

An ATP-binding site is contributed by 618–625; the sequence is GPNMSGKS.

Belongs to the DNA mismatch repair MutS family.

Its function is as follows. This protein is involved in the repair of mismatches in DNA. It is possible that it carries out the mismatch recognition step. This protein has a weak ATPase activity. This Christiangramia forsetii (strain DSM 17595 / CGMCC 1.15422 / KT0803) (Gramella forsetii) protein is DNA mismatch repair protein MutS.